A 178-amino-acid chain; its full sequence is ATP-dependent protease subunit HslV (178 aa).

Residue threonine 7 is part of the active site. Glycine 162, cysteine 165, and threonine 168 together coordinate Na(+).

The protein belongs to the peptidase T1B family. HslV subfamily. A double ring-shaped homohexamer of HslV is capped on each side by a ring-shaped HslU homohexamer. The assembly of the HslU/HslV complex is dependent on binding of ATP.

It is found in the cytoplasm. It catalyses the reaction ATP-dependent cleavage of peptide bonds with broad specificity.. Allosterically activated by HslU binding. In terms of biological role, protease subunit of a proteasome-like degradation complex believed to be a general protein degrading machinery. The sequence is that of ATP-dependent protease subunit HslV from Herminiimonas arsenicoxydans.